A 237-amino-acid polypeptide reads, in one-letter code: MAKEECKALLDALNKATACYHHLVLTIGGSADSQNLREELQKTRQKAQELAVAIRLRLTAPLRDRSLGAEERAEFERLWVAFSGCLDLLEADMRRALALSTEFPLQEPRRPLVRTGVEGGATGVAARALSVRSLRHEAHRDFDVEDLHQLEREILQVGEMIQDMEMKVNVPRWTVQARQAAGAELLSSASAGVSSVGGVSVEQRTGPCDLSKAKAATIFSAVLLAAVALAVCVAKLS.

Residues 1–214 (MAKEECKALL…TGPCDLSKAK (214 aa)) are Cytoplasmic-facing. Coiled coils occupy residues 29 to 58 (GSADSQNLREELQKTRQKAQELAVAIRLRL) and 144 to 169 (VEDLHQLEREILQVGEMIQDMEMKVN). The interval 153 to 202 (EILQVGEMIQDMEMKVNVPRWTVQARQAAGAELLSSASAGVSSVGGVSVE) is SNARE-like. The chain crosses the membrane as a helical; Anchor for type IV membrane protein span at residues 215–234 (AATIFSAVLLAAVALAVCVA). The Extracellular segment spans residues 235–237 (KLS).

The protein belongs to the RGS7BP/RGS9BP family. As to quaternary structure, specifically interacts with isoform RGS9-1 of RGS9. Component of the RGS9-1-Gbeta5 complex composed of RGS9-1, Gbeta5 (GNB5) and RGS9BP. In terms of tissue distribution, specifically expressed in the retina. Only present in photoreceptors (at protein level).

It is found in the membrane. Functionally, regulator of G protein-coupled receptor (GPCR) signaling in phototransduction. Participates in the recovery phase of visual transduction via its interaction with RGS9-1 isoform. Acts as a membrane-anchor that mediates the targeting of RGS9-1 to the photoreceptor outer segment, where phototransduction takes place. Enhances the ability of RGS9-1 to stimulate G protein GTPase activity, allowing the visual signal to be terminated on the physiologically time scale. It also controls the proteolytic stability of RGS9-1, probably by protecting it from degradation. The chain is Regulator of G-protein signaling 9-binding protein (RGS9BP) from Bos taurus (Bovine).